The chain runs to 1110 residues: Retinal guanylyl cyclase 1 (1110 aa).

The N-terminal stretch at 1–56 is a signal peptide; that stretch reads MTACTFLAGGLRDPGLCGPTRWAPSPPGLPPIPPRPRLRLRPPLLLLLLLPRSVLS. At 57–467 the chain is on the extracellular side; sequence AVFTVGVLGP…PDTICNGGVE (411 aa). An N-linked (GlcNAc...) asparagine glycan is attached at Asn302. The chain crosses the membrane as a helical span at residues 468–492; it reads PSVVFIGFLLVVGMGLAGAFLAHYC. One can recognise a Protein kinase domain in the interval 493-813; it reads RHRLLHIQMV…DRTFELFKSI (321 aa). The Cytoplasmic segment spans residues 493-1110; it reads RHRLLHIQMV…KARPGQFSGK (618 aa). A Guanylate cyclase domain is found at 885–1015; that stretch reads TLYFSDIVGF…DTVNTASAME (131 aa). The segment at 1070 to 1110 is disordered; sequence PIPKPPDLQPGASNHGISLHEIPPDRRQKLEKARPGQFSGK. A compositionally biased stretch (basic and acidic residues) spans 1091 to 1103; sequence IPPDRRQKLEKAR.

The protein belongs to the adenylyl cyclase class-4/guanylyl cyclase family. As to quaternary structure, homodimer; requires homodimerization for guanylyl cyclase activity. Interacts (via C-terminus) with RD3 (via C-terminus); promotes the exit of GUCY2D from the endoplasmic reticulum and its trafficking to the photoreceptor outer segments. Interaction with RD3 negatively regulates GUCY2D guanylate cyclase activity. As to expression, expressed in the retina in rod outer segment.

The protein resides in the photoreceptor outer segment membrane. The protein localises to the endoplasmic reticulum membrane. The catalysed reaction is GTP = 3',5'-cyclic GMP + diphosphate. Activated by GUCA1A when free calcium ions concentration is low, and inhibited by GUCA1A when free calcium ions concentration is high. Negatively regulated by RD3; inhibits the basal and GUCA1A-stimulated guanylate cyclase activity. In terms of biological role, catalyzes the synthesis of cyclic GMP (cGMP) in rods and cones of photoreceptors. Plays an essential role in phototransduction, by mediating cGMP replenishment. May also participate in the trafficking of membrane-asociated proteins to the photoreceptor outer segment membrane. The polypeptide is Retinal guanylyl cyclase 1 (GUCY2D) (Bos taurus (Bovine)).